Consider the following 808-residue polypeptide: DNA gyrase subunit B (808 aa).

Residues Ser-429 to Pro-544 form the Toprim domain. Mg(2+) contacts are provided by Glu-435, Asp-509, and Asp-511.

It belongs to the type II topoisomerase GyrB family. In terms of assembly, heterotetramer, composed of two GyrA and two GyrB chains. In the heterotetramer, GyrA contains the active site tyrosine that forms a transient covalent intermediate with DNA, while GyrB binds cofactors and catalyzes ATP hydrolysis. Mg(2+) is required as a cofactor. Requires Mn(2+) as cofactor. Ca(2+) serves as cofactor.

The protein localises to the cytoplasm. It carries out the reaction ATP-dependent breakage, passage and rejoining of double-stranded DNA.. A type II topoisomerase that negatively supercoils closed circular double-stranded (ds) DNA in an ATP-dependent manner to modulate DNA topology and maintain chromosomes in an underwound state. Negative supercoiling favors strand separation, and DNA replication, transcription, recombination and repair, all of which involve strand separation. Also able to catalyze the interconversion of other topological isomers of dsDNA rings, including catenanes and knotted rings. Type II topoisomerases break and join 2 DNA strands simultaneously in an ATP-dependent manner. This Rickettsia felis (strain ATCC VR-1525 / URRWXCal2) (Rickettsia azadi) protein is DNA gyrase subunit B.